The chain runs to 530 residues: Transcriptional regulator VasH (530 aa).

The 230-residue stretch at 193 to 422 (LIGESAAMQK…LKHLIEFGCA (230 aa)) folds into the Sigma-54 factor interaction domain. Residues 221-228 (GETGTGKE) and 284-293 (ANGGTLFLDE) each bind ATP.

Functionally, transcriptional regulator of the type VI secretion system. The chain is Transcriptional regulator VasH from Vibrio cholerae serotype O1 (strain ATCC 39315 / El Tor Inaba N16961).